An 872-amino-acid polypeptide reads, in one-letter code: TATA box-binding protein-associated factor RNA polymerase I subunit B (872 aa).

The RRN7-type zinc finger occupies 6–40 (ETMQLENMHCDVCEGTTFQEREGFYYCVECGTQKD). 4 residues coordinate Zn(2+): Cys15, Cys18, Cys32, and Cys35. Positions 41–72 (QIRAVDITAEDNFDDTAAGRYTARTIRQKKDT) are B-reader. Residues 73–84 (EKEDEDDITSWE) are B-linker. The tract at residues 85–312 (FYNYVLRGFL…LPGNVAAKGK (228 aa)) is N-terminal cyclin fold. Residues 187-206 (DASGYRSHGGASESEGEQSL) are disordered.

Belongs to the RRN7/TAF1B family.

The protein resides in the nucleus. It localises to the nucleolus. Functionally, component of RNA polymerase I core factor complex that acts as a GTF2B/TFIIB-like factor and plays a key role in multiple steps during transcription initiation such as pre-initiation complex (PIC) assembly and postpolymerase recruitment events in polymerase I (Pol I) transcription. Binds rDNA promoters and plays a role in Pol I recruitment. In Drosophila melanogaster (Fruit fly), this protein is TATA box-binding protein-associated factor RNA polymerase I subunit B.